Consider the following 1025-residue polypeptide: Transcription factor tau 131 kDa subunit (1025 aa).

Residues 1-26 (MAAGKLKKEQQNQSAERESADTGKVN) are compositionally biased toward basic and acidic residues. A disordered region spans residues 1 to 71 (MAAGKLKKEQ…EDEYNSERDS (71 aa)). A compositionally biased stretch (acidic residues) spans 46-65 (DEEYDDEDVPHDLQLSEDEY). TPR repeat units follow at residues 128 to 161 (VAQL…DARN), 162 to 195 (FAAY…NASD), 196 to 229 (WEFW…NPME), 230 to 263 (WESI…NPYD), and 264 to 297 (ANIL…NVER). The tract at residues 128–569 (VAQLLSQANE…VDVVEMRKHQ (442 aa)) is sufficient to bind BDP1. The disordered stretch occupies residues 309-334 (LDSSDEESAAEGEDADEKEPLEQDED). The residue at position 311 (Ser311) is a Phosphoserine. Residues 311-325 (SSDEESAAEGEDADE) show a composition bias toward acidic residues. 6 TPR repeats span residues 432 to 465 (IDIR…TFSD), 467 to 501 (ADLY…EWRT), 502 to 535 (TDVF…EPDD), 536 to 569 (LDIR…RKHQ), 875 to 908 (PYLY…IPDD), and 959 to 992 (QEAD…YDDG).

In terms of assembly, component of the TFIIIC complex composed of TFC1, TFC3, TFC4, TFC6, TFC7 and TFC8. The subunits are organized in two globular domains, tauA and tauB, connected by a proteolysis-sensitive and flexible linker. Interacts with TFC1, TFC3, TFC6, TFIIIB subunits BRF1 and BDP1, and with RNA polymerase III subunit RPC10. Phosphorylated.

The protein resides in the nucleus. Functionally, TFIIIC mediates tRNA and 5S RNA gene activation by binding to intragenic promoter elements. Upstream of the transcription start site, TFIIIC assembles the initiation complex TFIIIB-TFIIIC-tDNA, which is sufficient for RNA polymerase III recruitment and function. Part of the tauA domain of TFIIIC that binds boxA DNA promoter sites of tRNA and similar genes. TFC4 is the TFIIIB-assembling subunit of TFIIIC and essential for viability. The polypeptide is Transcription factor tau 131 kDa subunit (TFC4) (Saccharomyces cerevisiae (strain ATCC 204508 / S288c) (Baker's yeast)).